We begin with the raw amino-acid sequence, 991 residues long: MALEDMEKRYRISDLSRELQVSPQEVLQFIRMNGGKVGSTSSMVNEEMRGMIFGNFSVEKKMVDEAMKIRAEKQRRLTRLEEQSRKTYEKEQQLRDSMHVAPLVPVAPLHVAQDVIVEVAAPPSAQADHTVQAEPAVQTESAVQTESAVQTESAVQTEPAVQTEPAVQTEPEVQTEPAAQTEPEVQTEPAAQTEPAAQTEPAAQTESAVQTEADLSDVGEVSIVPENVEVIDVPELPMVPVMPVKEEPSVNDQLVSFDIPQNIGGLTVVGTLDMMNPFDRSESGKMKARKKNFKEQADALKSEFDTPAGEEKLVDDKLVVKKKPVKAAGDGDTAPAADDALAGKKKPGKKKKKPDVDEKVISANIRTTISGMDDSAGSVSRQKFRKMRRMEREKEHEAAEAFRESQRAIVRVTEYASPHELAELMGVTAKEIIQKCFALGKFVTINQRLDKESLELIALEFGFEAEFISEIEATAVVAEVDDAEDLLIRPPVVTIMGHVDHGKTSLLDYIRNSNVVAGESGGITQHIGAYEVTVEGNRKITFLDTPGHEAFTAMRARGAQVTDIVILVVAADDSVMPQTIEAINHAKAAGVPIVVAINKIDKPAANPEKIKTQLSEAGVLVEDWGGEYQCQEISAKQGIGIEELMGKLLTEAEIRELKGNFSEDVLASGIIIESELDKGKGVISTVLVQRGYLRVGDPFVAGNTMGRVRALMDERSKRIHEAGPSQPVRVLGFEALPQSGDVLTVMASDRDARELAQKRQVIRREHEFRRSTRVKLDSIARQIREGLMKELSVIIKADTDGSIQALADGLMKIHNEEVKVQIIHQGVGQITETDVLLAAASDAIIIGFRVRPNVNAKKLAEKEDLDVRFYSVIYHVLEDVEKALEGMLSPELHEESLGSLEIRQVFRVPKVGNVGGCYALEGKVFRDSKVRLLRDGVQVYDGQLDTLRRFKDDVKEVDAGYECGLSLKNYDDIKVGDIVEAYKIVEKKRKL.

Disordered regions lie at residues 126-220 (QADH…DVGE) and 325-359 (VKAAGDGDTAPAADDALAGKKKPGKKKKKPDVDEK). 2 stretches are compositionally biased toward polar residues: residues 138-160 (QTESAVQTESAVQTESAVQTEPA) and 201-210 (PAAQTESAVQ). A compositionally biased stretch (low complexity) spans 326–340 (KAAGDGDTAPAADDA). Positions 343 to 353 (GKKKPGKKKKK) are enriched in basic residues. The region spanning 488–658 (IRPPVVTIMG…LTEAEIRELK (171 aa)) is the tr-type G domain. Positions 497 to 504 (GHVDHGKT) are G1. 497–504 (GHVDHGKT) provides a ligand contact to GTP. A G2 region spans residues 522-526 (GITQH). The interval 544–547 (DTPG) is G3. Residues 544–548 (DTPGH) and 598–601 (NKID) each bind GTP. Residues 598 to 601 (NKID) are G4. Residues 634 to 636 (SAK) are G5.

The protein belongs to the TRAFAC class translation factor GTPase superfamily. Classic translation factor GTPase family. IF-2 subfamily.

The protein resides in the cytoplasm. Functionally, one of the essential components for the initiation of protein synthesis. Protects formylmethionyl-tRNA from spontaneous hydrolysis and promotes its binding to the 30S ribosomal subunits. Also involved in the hydrolysis of GTP during the formation of the 70S ribosomal complex. This is Translation initiation factor IF-2 from Chlorobium phaeobacteroides (strain DSM 266 / SMG 266 / 2430).